The primary structure comprises 485 residues: Cysteine protease atg4da (485 aa).

Residues 22-46 (ASASSKRHLGHGAVPDGIREGSGEP) are disordered. The active-site Nucleophile is the Cys131. Active-site residues include Asp368 and His370.

It belongs to the peptidase C54 family.

The protein localises to the cytoplasm. It carries out the reaction [protein]-C-terminal L-amino acid-glycyl-phosphatidylethanolamide + H2O = [protein]-C-terminal L-amino acid-glycine + a 1,2-diacyl-sn-glycero-3-phosphoethanolamine. The enzyme catalyses [protein]-C-terminal L-amino acid-glycyl-phosphatidylserine + H2O = [protein]-C-terminal L-amino acid-glycine + a 1,2-diacyl-sn-glycero-3-phospho-L-serine. Its function is as follows. Cysteine protease that plays a key role in autophagy by mediating both proteolytic activation and delipidation of ATG8 family proteins. The protease activity is required for proteolytic activation of ATG8 family proteins to reveal a C-terminal glycine. Exposure of the glycine at the C-terminus is essential for ATG8 proteins conjugation to phosphatidylethanolamine (PE) and insertion to membranes, which is necessary for autophagy. In addition to the protease activity, also mediates delipidation of ATG8 family proteins. Catalyzes delipidation of PE-conjugated forms of ATG8 proteins during macroautophagy. Also involved in non-canonical autophagy, a parallel pathway involving conjugation of ATG8 proteins to single membranes at endolysosomal compartments, by catalyzing delipidation of ATG8 proteins conjugated to phosphatidylserine (PS). ATG4D plays a role in the autophagy-mediated neuronal homeostasis in the central nervous system. The sequence is that of Cysteine protease atg4da from Danio rerio (Zebrafish).